The sequence spans 100 residues: uncharacterized protein (100 aa).

This is an uncharacterized protein from Mycoplasma genitalium (strain ATCC 33530 / DSM 19775 / NCTC 10195 / G37) (Mycoplasmoides genitalium).